Consider the following 162-residue polypeptide: uncharacterized protein (162 aa).

It belongs to the baculoviridae 19 kDa protein family.

This is an uncharacterized protein from Tortricidae (ClGV).